A 194-amino-acid polypeptide reads, in one-letter code: dCTP deaminase (194 aa).

Residues 110 to 115, Asp128, 136 to 138, Tyr171, Lys178, and Gln182 each bind dCTP; these read RSSLAR and VLE. Glu138 acts as the Proton donor/acceptor in catalysis.

The protein belongs to the dCTP deaminase family. As to quaternary structure, homotrimer.

The enzyme catalyses dCTP + H2O + H(+) = dUTP + NH4(+). It functions in the pathway pyrimidine metabolism; dUMP biosynthesis; dUMP from dCTP (dUTP route): step 1/2. In terms of biological role, catalyzes the deamination of dCTP to dUTP. In Pseudoalteromonas translucida (strain TAC 125), this protein is dCTP deaminase.